Consider the following 335-residue polypeptide: MKNELEKVMSGRDMTENEMNMLANSIIQGELSEVQIASFLVALKMKGEAASELTGLARALQKAAIPIPTNLTNAMDNCGTGGDRSFSFNISTTAAFVLAAGGVNMAKHGNRSITSKSGSADVLEALGINLYLPAEKLAQVFDKVGLVFLFAQNLHPAMKYFTPVRRQLEIPTIMNLTGPLINPIPLDTQLLGTSRPDLLELTANVLKGLGRKRALVITGEGGMDEATPFGLNHYALLENDKVTLHEFRASEVGISEVQLNDIRGGEAPENAEILKNVLENQPSAFLETTVLNAGLGFYANGKVDSIKSGVDLAREVISTGAALTKLHELQAEQIG.

5-phospho-alpha-D-ribose 1-diphosphate is bound by residues Gly79, 82-83, Ser87, 89-92, 107-115, and Ser119; these read GD, NIST, and KHGNRSITS. Residue Gly79 participates in anthranilate binding. A Mg(2+)-binding site is contributed by Ser91. An anthranilate-binding site is contributed by Asn110. Arg165 lines the anthranilate pocket. Residues Asp224 and Glu225 each contribute to the Mg(2+) site.

It belongs to the anthranilate phosphoribosyltransferase family. As to quaternary structure, homodimer. It depends on Mg(2+) as a cofactor.

It carries out the reaction N-(5-phospho-beta-D-ribosyl)anthranilate + diphosphate = 5-phospho-alpha-D-ribose 1-diphosphate + anthranilate. Its pathway is amino-acid biosynthesis; L-tryptophan biosynthesis; L-tryptophan from chorismate: step 2/5. Functionally, catalyzes the transfer of the phosphoribosyl group of 5-phosphorylribose-1-pyrophosphate (PRPP) to anthranilate to yield N-(5'-phosphoribosyl)-anthranilate (PRA). The polypeptide is Anthranilate phosphoribosyltransferase (Lactococcus lactis subsp. lactis (strain IL1403) (Streptococcus lactis)).